The following is a 354-amino-acid chain: Uroporphyrinogen decarboxylase (354 aa).

Substrate is bound by residues 27–31 (RQAGR), Asp-77, Tyr-154, Thr-209, and His-327.

Belongs to the uroporphyrinogen decarboxylase family. In terms of assembly, homodimer.

The protein resides in the cytoplasm. The enzyme catalyses uroporphyrinogen III + 4 H(+) = coproporphyrinogen III + 4 CO2. It participates in porphyrin-containing compound metabolism; protoporphyrin-IX biosynthesis; coproporphyrinogen-III from 5-aminolevulinate: step 4/4. In terms of biological role, catalyzes the decarboxylation of four acetate groups of uroporphyrinogen-III to yield coproporphyrinogen-III. This is Uroporphyrinogen decarboxylase from Salmonella paratyphi B (strain ATCC BAA-1250 / SPB7).